The sequence spans 426 residues: Fiber protein (426 aa).

It belongs to the adenoviridae fiber family. As to quaternary structure, homotrimer. Interacts with host receptor CXCAR. Interacts (via N-terminal tail region) with pentons.

It is found in the virion. Its subcellular location is the host nucleus. Its function is as follows. Forms spikes that protrude from each vertex of the icosahedral capsid. Interacts with host receptor CXCAR to provide virion initial attachment to target cell. Fiber proteins are shed during virus entry, when virus is still at the cell surface. The protein is Fiber protein of Human adenovirus E serotype 4 (HAdV-4).